The following is a 223-amino-acid chain: uncharacterized protein (223 aa).

The segment covering 1 to 11 (MLWVQRKRRRK) has biased composition (basic residues). Residues 1–37 (MLWVQRKRRRKETSECPSDKDKSPESHKAKNESWIKS) form a disordered region. Over residues 12–37 (ETSECPSDKDKSPESHKAKNESWIKS) the composition is skewed to basic and acidic residues. S43 carries the post-translational modification Phosphoserine. 2 disordered regions span residues 49–73 (LDNN…SSTV) and 196–223 (THTF…NRRH). A compositionally biased stretch (polar residues) spans 51-61 (NNASASGNATQ). Positions 62 to 73 (TESGSEEVSSTV) are enriched in low complexity. Residues 202–223 (HSHHSHHGHPSHQSHSLPNRRH) show a composition bias toward basic residues.

This is an uncharacterized protein from Homo sapiens (Human).